The following is a 430-amino-acid chain: MKLLVIGSGGREHALVWKLAHSRRVSEIIVAPGNAGTATETKCRNAPVQVTDLDGLLALAQREAVNITVVGPEVPLVAGIVDCFRAAGMRIFGPTAAAAQLEGSKAYAKDFMARHGIPTARYAVHTNVDAAISDVRQQGAPIVIKADGLAAGKGVIVAMTVTEAEAAIRDMLSGNAFGHAGARVVIEEYLDGEEASFISMVDGTHALPMATSQDHKRVSDGDIGPNTGGMGAYSPAPIITDEIHARVMREIVNPTVAGMIADGTPFMGFLYAGLMIDVHGAPKVIEFNVRFGDPETQPVMMRLQSDLLDLIEAALNGDLDKVQAQWDPHPSLGVVMAARPYPEMPITGEVISGLDALPANVKVFHAGTALDVAGRVVTAGGRVLCVTALGSNVSEAQRHAYGGVASLHWANAFQRSDIGWRAIMREHTVR.

Residues 109 to 316 (KDFMARHGIP…LLDLIEAALN (208 aa)) form the ATP-grasp domain. Residue 135–196 (VRQQGAPIVI…EEYLDGEEAS (62 aa)) participates in ATP binding. Mg(2+)-binding residues include glutamate 286 and asparagine 288.

Belongs to the GARS family. Mg(2+) serves as cofactor. The cofactor is Mn(2+).

It carries out the reaction 5-phospho-beta-D-ribosylamine + glycine + ATP = N(1)-(5-phospho-beta-D-ribosyl)glycinamide + ADP + phosphate + H(+). It functions in the pathway purine metabolism; IMP biosynthesis via de novo pathway; N(1)-(5-phospho-D-ribosyl)glycinamide from 5-phospho-alpha-D-ribose 1-diphosphate: step 2/2. The chain is Phosphoribosylamine--glycine ligase from Xylella fastidiosa (strain Temecula1 / ATCC 700964).